The chain runs to 737 residues: FYVE, RhoGEF and PH domain-containing protein 3 (737 aa).

Residues Met1 to Gln151 form a disordered region. Residues Ala126 to Ser136 show a composition bias toward acidic residues. Ser128 is modified (phosphoserine). The DH domain occupies Lys157–Ala341. The PH 1 domain occupies Glu370 to Glu469. Positions Gln487–Lys533 are disordered. Over residues Thr500–Glu512 the composition is skewed to low complexity. Positions Glu521 to Lys533 are enriched in basic and acidic residues. An FYVE-type zinc finger spans residues Asp532 to Pro588. The Zn(2+) site is built by Cys538, Cys541, Cys555, Cys558, Cys563, Cys566, Cys580, and Cys583. Disordered regions lie at residues Val589–Cys620 and Ala713–Pro737. One can recognise a PH 2 domain in the interval Pro616–Arg715.

Its subcellular location is the cytoplasm. It is found in the cytoskeleton. Its function is as follows. Promotes the formation of filopodia. May activate CDC42, a member of the Ras-like family of Rho- and Rac proteins, by exchanging bound GDP for free GTP. Plays a role in regulating the actin cytoskeleton and cell shape. This Pongo abelii (Sumatran orangutan) protein is FYVE, RhoGEF and PH domain-containing protein 3 (FGD3).